The sequence spans 433 residues: Probable M18 family aminopeptidase 2 (433 aa).

Residues His-79, His-153, and His-404 each coordinate Zn(2+).

It belongs to the peptidase M18 family. Requires Zn(2+) as cofactor.

The sequence is that of Probable M18 family aminopeptidase 2 (apeB) from Mycobacterium bovis (strain ATCC BAA-935 / AF2122/97).